The following is a 268-amino-acid chain: Aliphatic sulfonates import ATP-binding protein SsuB (268 aa).

The ABC transporter domain maps to 15-236 (LAVRNLQKTF…VRGSHRLAAL (222 aa)). 47–54 (GRSGCGKS) is a binding site for ATP.

The protein belongs to the ABC transporter superfamily. Aliphatic sulfonates importer (TC 3.A.1.17.2) family. In terms of assembly, the complex is composed of two ATP-binding proteins (SsuB), two transmembrane proteins (SsuC) and a solute-binding protein (SsuA).

The protein resides in the cell inner membrane. The catalysed reaction is ATP + H2O + aliphatic sulfonate-[sulfonate-binding protein]Side 1 = ADP + phosphate + aliphatic sulfonateSide 2 + [sulfonate-binding protein]Side 1.. Part of the ABC transporter complex SsuABC involved in aliphatic sulfonates import. Responsible for energy coupling to the transport system. This Pseudomonas fluorescens (strain Pf0-1) protein is Aliphatic sulfonates import ATP-binding protein SsuB.